The chain runs to 283 residues: MNEKIAVVTDSTTYLPDEVKEQLRINVVPLSVIIDGKSYREGEELSTADFYKKVKEAENFPTSSQPAPGEFIQLFEKLKEQGFDTVISIHLSSGISGTFQNAASAGELIDGLNVVAYDSELSCMAQGMFAVKAAEMALANEPLERIISELDKIKKAQDAYFMVDDLNNLQRGGRLNGAQALVGSLLQIKPILHFNDKQIVLFEKVRTQKKALKRIEDILEVAIKNKNAEKAYVIHGNDPEKGETWRKHLESKFPEVEFELSYFGPVIGTHLGEGALGLTWSIK.

Residues 5-282 enclose the DegV domain; sequence IAVVTDSTTY…EGALGLTWSI (278 aa). Serine 63 and serine 96 together coordinate hexadecanoate.

May bind long-chain fatty acids, such as palmitate, and may play a role in lipid transport or fatty acid metabolism. This is DegV domain-containing protein lin2658 from Listeria innocua serovar 6a (strain ATCC BAA-680 / CLIP 11262).